The primary structure comprises 1008 residues: Kinesin-like protein KIN-5C (1008 aa).

Residues 12–359 (NVQVLLRCRP…LDYAHRAKSI (348 aa)) form the Kinesin motor domain. 98 to 105 (GQTGTGKT) lines the ATP pocket. A coiled-coil region spans residues 402-459 (KDRYQQEENERKAMADQIEQMTTSLEANQKQINDLQEKYDSELQHSADLSKKLEATEK). 3 disordered regions span residues 910-931 (VEAH…TAGI), 943-962 (YKDY…EVPS), and 975-1008 (ESLM…TINN). Basic and acidic residues predominate over residues 913–925 (HLGESQHLQESHS). Positions 979-995 (DEFRENHPYEPSKDRRP) are enriched in basic and acidic residues.

It belongs to the TRAFAC class myosin-kinesin ATPase superfamily. Kinesin family. KIN-5/BimC subfamily.

The protein localises to the cytoplasm. It localises to the cytoskeleton. It is found in the spindle. Functionally, responsible for microtubule translocation. May be important for the organization of phragmoplast-specific arrays of microtubules. Plays an essential role in stabilizing the mitotic spindle. Required during mitotic cytokinesis. This is Kinesin-like protein KIN-5C from Oryza sativa subsp. japonica (Rice).